A 175-amino-acid chain; its full sequence is Large ribosomal subunit protein uL6 (175 aa).

This sequence belongs to the universal ribosomal protein uL6 family. As to quaternary structure, part of the 50S ribosomal subunit.

Functionally, this protein binds to the 23S rRNA, and is important in its secondary structure. It is located near the subunit interface in the base of the L7/L12 stalk, and near the tRNA binding site of the peptidyltransferase center. The chain is Large ribosomal subunit protein uL6 from Xanthomonas campestris pv. campestris (strain 8004).